Consider the following 186-residue polypeptide: Transcriptional repressor NrdR (186 aa).

The tract at residues M1–A24 is disordered. A zinc finger spans residues C3–C34. Basic and acidic residues predominate over residues Q12 to A24. Residues L49–D139 form the ATP-cone domain. The tract at residues R146–A186 is disordered.

The protein belongs to the NrdR family. Zn(2+) is required as a cofactor.

Its function is as follows. Negatively regulates transcription of bacterial ribonucleotide reductase nrd genes and operons by binding to NrdR-boxes. The polypeptide is Transcriptional repressor NrdR (Methylobacterium sp. (strain 4-46)).